We begin with the raw amino-acid sequence, 204 residues long: Proteasome subunit beta type-2-A (204 aa).

The residue at position 1 (methionine 1) is an N-acetylmethionine.

Belongs to the peptidase T1B family. As to quaternary structure, component of the 20S core complex of the 26S proteasome. The 26S proteasome is composed of a core protease (CP), known as the 20S proteasome, capped at one or both ends by the 19S regulatory particle (RP/PA700). The 20S proteasome core is composed of 28 subunits that are arranged in four stacked rings, resulting in a barrel-shaped structure. The two end rings are each formed by seven alpha subunits, and the two central rings are each formed by seven beta subunits. The catalytic chamber with the active sites is on the inside of the barrel.

It localises to the cytoplasm. The protein localises to the nucleus. Its function is as follows. Non-catalytic component of the proteasome, a multicatalytic proteinase complex which is characterized by its ability to cleave peptides with Arg, Phe, Tyr, Leu, and Glu adjacent to the leaving group at neutral or slightly basic pH. The proteasome has an ATP-dependent proteolytic activity. The protein is Proteasome subunit beta type-2-A (PBD1) of Arabidopsis thaliana (Mouse-ear cress).